Here is a 457-residue protein sequence, read N- to C-terminus: tRNA modification GTPase MnmE (457 aa).

Residues Arg-22, Glu-83, and Arg-122 each contribute to the (6S)-5-formyl-5,6,7,8-tetrahydrofolate site. The TrmE-type G domain occupies 219-378; sequence GLATAIIGRP…LEEAIKTLFF (160 aa). Asn-229 contacts K(+). GTP contacts are provided by residues 229–234, 248–254, and 273–276; these read NVGKSS, TDIAGTT, and DTAG. Ser-233 contributes to the Mg(2+) binding site. 3 residues coordinate K(+): Thr-248, Ile-250, and Thr-253. Thr-254 lines the Mg(2+) pocket. Lys-457 serves as a coordination point for (6S)-5-formyl-5,6,7,8-tetrahydrofolate.

Belongs to the TRAFAC class TrmE-Era-EngA-EngB-Septin-like GTPase superfamily. TrmE GTPase family. As to quaternary structure, homodimer. Heterotetramer of two MnmE and two MnmG subunits. K(+) is required as a cofactor.

The protein localises to the cytoplasm. In terms of biological role, exhibits a very high intrinsic GTPase hydrolysis rate. Involved in the addition of a carboxymethylaminomethyl (cmnm) group at the wobble position (U34) of certain tRNAs, forming tRNA-cmnm(5)s(2)U34. The polypeptide is tRNA modification GTPase MnmE (Listeria welshimeri serovar 6b (strain ATCC 35897 / DSM 20650 / CCUG 15529 / CIP 8149 / NCTC 11857 / SLCC 5334 / V8)).